Here is a 571-residue protein sequence, read N- to C-terminus: Urease subunit alpha (571 aa).

Residues 132–571 (GGIDAHIHFI…VALAQRYFLF (440 aa)) enclose the Urease domain. 3 residues coordinate Ni(2+): H137, H139, and K220. K220 bears the N6-carboxylysine mark. H222 contributes to the substrate binding site. Residues H249 and H275 each coordinate Ni(2+). Residue H323 is the Proton donor of the active site. D363 serves as a coordination point for Ni(2+).

The protein belongs to the metallo-dependent hydrolases superfamily. Urease alpha subunit family. As to quaternary structure, heterotrimer of UreA (gamma), UreB (beta) and UreC (alpha) subunits. Three heterotrimers associate to form the active enzyme. Requires Ni cation as cofactor. Carboxylation allows a single lysine to coordinate two nickel ions.

It is found in the cytoplasm. The enzyme catalyses urea + 2 H2O + H(+) = hydrogencarbonate + 2 NH4(+). It participates in nitrogen metabolism; urea degradation; CO(2) and NH(3) from urea (urease route): step 1/1. The chain is Urease subunit alpha from Halalkalibacterium halodurans (strain ATCC BAA-125 / DSM 18197 / FERM 7344 / JCM 9153 / C-125) (Bacillus halodurans).